The chain runs to 298 residues: NAD-dependent L-serine dehydrogenase (298 aa).

Residues 2–31 (KQIA…NVFD), 65–66 (LP), P66, and T96 each bind NAD(+). K171 is an active-site residue. K246 serves as a coordination point for NAD(+).

This sequence belongs to the HIBADH-related family. As to quaternary structure, homotetramer, dimer of dimers.

It catalyses the reaction L-serine + NAD(+) = aminoacetaldehyde + CO2 + NADH. The protein operates within amino-acid degradation. Functionally, NAD-dependent L-serine dehydrogenase that catalyzes the oxidation of L-serine and methyl-L-serine and is possibly involved in serine catabolism. Has low activity toward beta-hydroxyisobutyrate. The chain is NAD-dependent L-serine dehydrogenase from Pseudomonas aeruginosa (strain ATCC 15692 / DSM 22644 / CIP 104116 / JCM 14847 / LMG 12228 / 1C / PRS 101 / PAO1).